A 181-amino-acid chain; its full sequence is Cytochrome c oxidase subunit 2 (181 aa).

Cu cation is bound by residues C126, E128, C130, H134, and M137. E128 contacts Mg(2+).

This sequence belongs to the cytochrome c oxidase subunit 2 family. As to quaternary structure, component of the cytochrome c oxidase (complex IV, CIV), a multisubunit enzyme composed of a catalytic core of 3 subunits and several supernumerary subunits. The complex exists as a monomer or a dimer and forms supercomplexes (SCs) in the inner mitochondrial membrane with ubiquinol-cytochrome c oxidoreductase (cytochrome b-c1 complex, complex III, CIII). Cu cation is required as a cofactor.

The protein localises to the mitochondrion inner membrane. The catalysed reaction is 4 Fe(II)-[cytochrome c] + O2 + 8 H(+)(in) = 4 Fe(III)-[cytochrome c] + 2 H2O + 4 H(+)(out). Its function is as follows. Component of the cytochrome c oxidase, the last enzyme in the mitochondrial electron transport chain which drives oxidative phosphorylation. The respiratory chain contains 3 multisubunit complexes succinate dehydrogenase (complex II, CII), ubiquinol-cytochrome c oxidoreductase (cytochrome b-c1 complex, complex III, CIII) and cytochrome c oxidase (complex IV, CIV), that cooperate to transfer electrons derived from NADH and succinate to molecular oxygen, creating an electrochemical gradient over the inner membrane that drives transmembrane transport and the ATP synthase. Cytochrome c oxidase is the component of the respiratory chain that catalyzes the reduction of oxygen to water. Electrons originating from reduced cytochrome c in the intermembrane space (IMS) are transferred via the dinuclear copper A center (CU(A)) of subunit 2 and heme A of subunit 1 to the active site in subunit 1, a binuclear center (BNC) formed by heme A3 and copper B (CU(B)). The BNC reduces molecular oxygen to 2 water molecules using 4 electrons from cytochrome c in the IMS and 4 protons from the mitochondrial matrix. The chain is Cytochrome c oxidase subunit 2 (COII) from Paramecium primaurelia.